The chain runs to 192 residues: Putative cyclic ADP-D-ribose synthase ThsB1 (192 aa).

It belongs to the Thoeris B TIR-like family. In terms of assembly, monomer; not seen to interact with ThsA.

The protein localises to the cytoplasm. Activated upon phage infection. TIR-like domain-containing component of the Thoeris antiviral defense system, composed of ThsA and ThsB. Expression of ThsA and ThsB in B.subtilis (strain BEST7003) confers resistance to phages SBSphiC, SBSphiJ and SPO1. Phage infection activates this protein so that 30 to 45 minutes post-infection with phage SPO1 it generates a signal molecule that in turn activates the NAD(+) hydrolase activity of ThsA. The signal is similar to cyclic ADP-D-ribose, but how it differs is unknown. In vitro purified (but unactivated) ThsB has no NAD(+) hydrolyzing activity, no activity on AMP, CMP, GMP or UMP, does not alter the activity of ThsA, does not bind DNA. Hydrolyzes NAD(+) to make a cyclic ADP-D-ribose (cADPR) signaling molecule; might make 3'cADPR. The sequence is that of Putative cyclic ADP-D-ribose synthase ThsB1 from Bacillus cereus (strain MSX-D12).